The sequence spans 855 residues: DNA mismatch repair protein MutS (855 aa).

An ATP-binding site is contributed by 613-620; it reads GPNMGGKS.

The protein belongs to the DNA mismatch repair MutS family.

Its function is as follows. This protein is involved in the repair of mismatches in DNA. It is possible that it carries out the mismatch recognition step. This protein has a weak ATPase activity. This Azotobacter vinelandii (strain DJ / ATCC BAA-1303) protein is DNA mismatch repair protein MutS.